A 5762-amino-acid chain; its full sequence is Mucin-5B (5762 aa).

Residues 1–25 (MGAPSACRTLVLALAAMLVVPQAET) form the signal peptide. Residues 27-50 (GPVEPSWENAGHTMDGGAPTSSPT) form a disordered region. The region spanning 75–245 (RVCSTWGDFH…KLDGPTEQCP (171 aa)) is the VWFD 1 domain. 2 cysteine pairs are disulfide-bonded: cysteine 77–cysteine 207 and cysteine 99–cysteine 244. Asparagine 145 carries N-linked (GlcNAc...) asparagine glycosylation. Glutamate 194 provides a ligand contact to Cu(2+). Residues asparagine 201 and asparagine 254 are each glycosylated (N-linked (GlcNAc...) asparagine). Cu(2+) is bound by residues histidine 311 and histidine 358. The TIL 1 domain maps to 329–385 (CPLNMQHQECGSPCTDTCSNPQRAQLCEDHCVDGCFCPPGTVLDDITHSGCLPLGQC). Asparagine 401 is a glycosylation site (N-linked (GlcNAc...) asparagine). Positions 423 to 598 (GTCSVQGGAH…NTWKAQAACA (176 aa)) constitute a VWFD 2 domain. 3 cysteine pairs are disulfide-bonded: cysteine 425/cysteine 562, cysteine 447/cysteine 597, and cysteine 469/cysteine 477. The N-linked (GlcNAc...) asparagine glycan is linked to asparagine 515. 2 consecutive TIL domains span residues 695-752 (CPKS…AQEC) and 805-855 (NSSA…EEDC). Asparagine 805 carries an N-linked (GlcNAc...) asparagine glycan. One can recognise a VWFC 1 domain in the interval 855–927 (CPCVHNEATY…EYILAQDYCG (73 aa)). The 170-residue stretch at 893–1062 (GTCVAYGDGH…NSWKLSPSCP (170 aa)) folds into the VWFD 3 domain. 4 disulfide bridges follow: cysteine 895/cysteine 1026, cysteine 917/cysteine 1061, cysteine 926/cysteine 1023, and cysteine 944/cysteine 951. Asparagine 929 is a glycosylation site (N-linked (GlcNAc...) asparagine). 2 N-linked (GlcNAc...) asparagine glycosylation sites follow: asparagine 1276 and asparagine 1292. Residues 1333-1432 (CVREVCRWSS…RVLCCEYVPC (100 aa)) form a Cys-rich subdomain 1 repeat. Residues 1333 to 4228 (CVREVCRWSS…RVFCCNYGHC (2896 aa)) are 7 X Cys-rich subdomain repeats. C-linked (Man) tryptophan glycosylation occurs at tryptophan 1340. Disordered regions lie at residues 1437–1462 (APGT…QTTA) and 1480–1502 (LTSQ…GTTT). Low complexity predominate over residues 1450–1462 (TEPAVPTPTQTTA). A Cys-rich subdomain 2 repeat occupies 1503–1604 (CQPRCQWTEW…VLCCSDDHCR (102 aa)). C-linked (Man) tryptophan glycosylation occurs at tryptophan 1509. Residue asparagine 1556 is glycosylated (N-linked (GlcNAc...) asparagine). Positions 1607-1783 (ATTPPPTTEL…NTTTSQGTTR (177 aa)) are disordered. Residues 1614–1624 (TELETATTTTT) show a composition bias toward low complexity. 2 stretches are compositionally biased toward polar residues: residues 1625–1638 (QALF…SSPG) and 1645–1662 (ASTT…SPRY). Positions 1663–1684 (TSTLGTATTGGPTTPAGSTEPT) are enriched in low complexity. Residues 1689–1706 (ATSTLPTRSALPGTTGSL) show a composition bias toward polar residues. Composition is skewed to low complexity over residues 1739–1756 (EPLT…LSTS) and 1765–1777 (TETT…NTTT). N-linked (GlcNAc...) asparagine glycosylation occurs at asparagine 1774. The Cys-rich subdomain 3 repeat unit spans residues 1784–1885 (CQPKCEWTEW…VLCCDDYSHC (102 aa)). Residue tryptophan 1790 is glycosylated (C-linked (Man) tryptophan). Positions 1890 to 1987 (ATSSTATPSS…TSVTPIPSSS (98 aa)) are enriched in low complexity. 4 disordered regions span residues 1890 to 2019 (ATSS…TAHT), 2031 to 2100 (GATG…GTTH), 2114 to 2211 (TGSM…HTVR), and 2242 to 2302 (TGTT…SSPT). The interval 1890–2199 (ATSSTATPSS…VPNTMATTHG (310 aa)) is 11 X approximate tandem repeats, Ser/Thr-rich. Residues 1988-1997 (LGTTWTRLSQ) are compositionally biased toward polar residues. A compositionally biased stretch (low complexity) spans 1998–2019 (TTTPTATMSTATPSSTPETAHT). Residues 2114–2181 (TGSMATPSSS…TSNTVTPSSA (68 aa)) show a composition bias toward low complexity. Polar residues predominate over residues 2182-2199 (LGTTHTPPVPNTMATTHG). One copy of the Cys-rich subdomain 4 repeat lies at 2313–2414 (GCEPQCAWSE…RVFCCNYGHC (102 aa)). The C-linked (Man) tryptophan glycan is linked to tryptophan 2320. The 11 X approximate tandem repeats, Ser/Thr-rich stretch occupies residues 2419–2756 (ATSSTAMPSS…VPNTTATTHG (338 aa)). 3 disordered regions span residues 2443 to 2462 (ATTT…PGTT), 2473 to 2522 (TVTV…ATAL), and 2556 to 2861 (TTPT…PTSA). Residues 2556 to 2738 (TTPTATMSTA…TSSTVTPSSA (183 aa)) show a composition bias toward low complexity. Residues 2739–2786 (LGTTHTPPVPNTTATTHGRSLSPSSPHTVRTAWTSATSGTLGTTHITE) show a composition bias toward polar residues. An N-linked (GlcNAc...) asparagine glycan is attached at asparagine 2749. The span at 2787–2861 (PSTGTSHTPA…TLLPSSPTSA (75 aa)) shows a compositional bias: low complexity. One copy of the HAT 1 repeat lies at 2854-2886 (LPSSPTSAPITTVVTMGCEPQCAWSEWLDYSYP). The stretch at 2871 to 2971 (CEPQCAWSEW…RVFCCNYGHC (101 aa)) is one Cys-rich subdomain 5 repeat. Tryptophan 2877 carries C-linked (Man) tryptophan glycosylation. A 17 X approximate tandem repeats, Ser/Thr-rich region spans residues 2976 to 3456 (ATSSTATPSS…VPNTTATTHG (481 aa)). Low complexity-rich tracts occupy residues 3001 to 3017 (TTTA…STPG) and 3026 to 3049 (TSTA…RTAT). 4 disordered regions span residues 3001–3049 (TTTA…RTAT), 3256–3357 (TTPT…GTTH), 3371–3469 (TGSM…TVRT), and 3481–3561 (TTHI…PTSA). A compositionally biased stretch (low complexity) spans 3371 to 3438 (TGSMATPSSS…TSSTVTPSSA (68 aa)). Residues 3439–3456 (LGTTHTPPVPNTTATTHG) are compositionally biased toward polar residues. Residue asparagine 3449 is glycosylated (N-linked (GlcNAc...) asparagine). The span at 3487-3561 (PSTVTSHTPA…TLLPSSPTSA (75 aa)) shows a compositional bias: low complexity. The stretch at 3554–3586 (LPSSPTSAPITTVVTTGCEPQCAWSEWLDYSYP) is one HAT 2 repeat. The stretch at 3571–3671 (CEPQCAWSEW…RVFCCNYGHC (101 aa)) is one Cys-rich subdomain 6 repeat. Tryptophan 3577 is a glycosylation site (C-linked (Man) tryptophan). The interval 3676–4013 (ATSSTATPSS…VPNTTATTHG (338 aa)) is 11 X approximate tandem repeats, Ser/Thr-rich. Disordered stretches follow at residues 3699–3779 (TATT…ATAL), 3813–3917 (TTPT…HTPT), and 3956–4118 (ATGS…PTSA). Residues 3956-3995 (ATGSTTNPSSTPGTTPIPPVLTTTATTPAATSSTVTPSSA) are compositionally biased toward low complexity. Residues 3996–4043 (LGTTHTPPVPNTTATTHGRSLSPSSPHTVRTAWTSATSGTLGTTHITE) show a composition bias toward polar residues. N-linked (GlcNAc...) asparagine glycosylation occurs at asparagine 4006. Residues 4044–4118 (PSTGTSHTPA…TLLPSSPTSA (75 aa)) show a composition bias toward low complexity. One copy of the HAT 3 repeat lies at 4111–4143 (LPSSPTSAPITTVVTTGCEPQCAWSEWLDYSYP). A Cys-rich subdomain 7 repeat occupies 4128-4228 (CEPQCAWSEW…RVFCCNYGHC (101 aa)). Tryptophan 4134 carries C-linked (Man) tryptophan glycosylation. Positions 4233–4879 (ATSSTAMPSS…TLGTAHTPKV (647 aa)) are 23 X approximate tandem repeats, Ser/Thr-rich. Composition is skewed to low complexity over residues 4259–4274 (TTAS…STPG) and 4283–4389 (TSPA…PGTT). Disordered regions lie at residues 4259–4389 (TTAS…PGTT), 4428–4447 (ATTT…PGTT), 4458–4527 (TVTV…AIPS), and 4541–4750 (TTPT…ATSF). Asparagine 4804, asparagine 4960, asparagine 5017, asparagine 5024, asparagine 5046, asparagine 5096, and asparagine 5111 each carry an N-linked (GlcNAc...) asparagine glycan. In terms of domain architecture, VWFD 4 spans 5073-5261 (CICSMWGGSH…VPDSRKDGCW (189 aa)). Cystine bridges form between cysteine 5075–cysteine 5221, cysteine 5097–cysteine 5260, and cysteine 5121–cysteine 5132. Residue asparagine 5215 is glycosylated (N-linked (GlcNAc...) asparagine). A VWFC 2 domain is found at 5412–5484 (CPCVGPDGFP…NPCCPETVCV (73 aa)). N-linked (GlcNAc...) asparagine glycosylation is found at asparagine 5486, asparagine 5526, asparagine 5565, asparagine 5566, asparagine 5602, asparagine 5612, asparagine 5663, asparagine 5677, and asparagine 5721. Positions 5521-5587 (QLCSYNGTFY…VAGQCCGECV (67 aa)) constitute a VWFC 3 domain. Intrachain disulfides connect cysteine 5653/cysteine 5705, cysteine 5672/cysteine 5719, cysteine 5681/cysteine 5735, and cysteine 5685/cysteine 5737. A CTCK domain is found at 5653-5742 (CEEDSCQVRI…DECGCTPFCV (90 aa)).

In terms of assembly, homomultimer; disulfide-linked. The N- and C-terminus mediate their assembly into higher order structures to form filaments. The CTCK domains of two polypeptides associate in the endoplasmic reticulum to generate intermolecularly disulfide-bonded dimers. These dimers progress to the Golgi apparatus, which is a more acidic environment than the endoplasmic reticulum. Under acidic conditions, the N-termini form non-covalent intermolecular interactions that juxtapose assemblies from different CTCK-linked dimers to produce long, disulfide-linked polymers that remain highly compact until secretion. In terms of processing, highly glycosylated. C-, N- and O-glycosylated. C-mannosylated in the Cys-rich subdomains probably on the first Trp residue of the WXXW motif. Highly O-glycosylated in the Ser/Thr-rich tandem repeat (TR) region. The repeat region is about 59% O-glycosylated with a high abundance of NeuAc(2)Hex(1)HexNac1-ol. As to expression, expressed on surface airway epithelia. Expressed mainly in mucous cells of submucosal glands of airway tissues. Highly expressed in the sublingual gland. Also found in submaxillary glands, endocervix, gall bladder, and pancreas.

Its subcellular location is the secreted. Functionally, gel-forming mucin that is thought to contribute to the lubricating and viscoelastic properties of whole saliva and cervical mucus. The protein is Mucin-5B (MUC5B) of Homo sapiens (Human).